A 253-amino-acid polypeptide reads, in one-letter code: Sporulation initiation inhibitor protein Soj (253 aa).

ATP is bound by residues K11, G12, G13, V14, G15, K16, T17, T18, P214, and N216. Residue T17 coordinates Mg(2+).

Belongs to the ParA family. In terms of assembly, dimerizes in the presence of ATP but not ADP; ATP-binding is required for double-stranded (ds)DNA-binding. Interacts with DnaA.

Its subcellular location is the cytoplasm. It carries out the reaction ATP + H2O = ADP + phosphate + H(+). In terms of biological role, acts as a spatially regulated molecular switch, capable of either inhibiting or activating the ability of DnaA to initiate DNA replication. Monomeric ADP-Soj inhibits oligomerization of DnaA on single-stranded (ss)- or double-stranded (ds)DNA, thus inhibiting DNA replication initiation; does not disassemble premade DnaA-DNA filaments. Decreases the residence time of DnaA on the chromosome at its binding sites (oriC, replication forks and (probably) promoter-binding sites). Soj forms nucleoprotein filaments in an ATP- and DNA-dependent manner. Inhibits the initiation of sporulation, Spo0J antagonizes this inhibition. Soj ultimately inhibits the activation (phosphorylation) of Spo0A. In Bacillus subtilis (strain 168), this protein is Sporulation initiation inhibitor protein Soj.